We begin with the raw amino-acid sequence, 275 residues long: Bis(5'-nucleosyl)-tetraphosphatase, symmetrical (275 aa).

The protein belongs to the Ap4A hydrolase family.

The enzyme catalyses P(1),P(4)-bis(5'-adenosyl) tetraphosphate + H2O = 2 ADP + 2 H(+). Its function is as follows. Hydrolyzes diadenosine 5',5'''-P1,P4-tetraphosphate to yield ADP. This Actinobacillus succinogenes (strain ATCC 55618 / DSM 22257 / CCUG 43843 / 130Z) protein is Bis(5'-nucleosyl)-tetraphosphatase, symmetrical.